We begin with the raw amino-acid sequence, 66 residues long: Large ribosomal subunit protein bL32 (66 aa).

The protein belongs to the bacterial ribosomal protein bL32 family.

This chain is Large ribosomal subunit protein bL32, found in Rickettsia conorii (strain ATCC VR-613 / Malish 7).